The following is a 501-amino-acid chain: Serine/threonine protein phosphatase 2A 55 kDa regulatory subunit B beta isoform (501 aa).

M1 carries the post-translational modification N-acetylmethionine. 5 WD repeats span residues 34 to 73 (QEVD…DHGG), 110 to 151 (EIEE…IKKI), 220 to 258 (AHDY…QSFN), 269 to 309 (DLTE…LCDS), and 328 to 366 (EIIA…GPVA). Positions 439–449 (TPARPSRSIGS) are enriched in polar residues. Residues 439–466 (TPARPSRSIGSMTRVVRRGSESPGTEAN) form a disordered region. Residues 471-501 (DFTTKLLHMAWHPTENSIACAAANSLYMYYA) form a WD 6 repeat.

It belongs to the phosphatase 2A regulatory subunit B family. PP2A consists of a common heteromeric enzyme, composed of a catalytic subunit (subunits C), a constant regulatory subunit (subunit A), and a variety of regulatory subunits such as subunits B (the R2/B/PR55/B55, R3/B''/PR72/PR130/PR59 and R5/B'/B56 families). Interacts with SIC/RON3. In terms of tissue distribution, expressed ubiquitously.

In terms of biological role, the B regulatory subunit may modulate substrate selectivity and catalytic activity, and may also direct the localization of the catalytic enzyme to a particular subcellular compartment. This is Serine/threonine protein phosphatase 2A 55 kDa regulatory subunit B beta isoform (PP2AB2) from Arabidopsis thaliana (Mouse-ear cress).